The primary structure comprises 328 residues: Nickel import system permease protein NikB (328 aa).

6 helical membrane-spanning segments follow: residues 11–31, 104–124, 139–159, 170–190, 229–249, and 279–299; these read LMQMIVVLFVISTLTFILMKL, LLISFSTLVVSLCISIPLGII, VISTLSISLPAFFIGIILLFI, ILSQFILPVITLSLGMCAYII, ILPIIPLLGISLGSLIGGTVV, and VLFIGFFVVIINTIADLLTLL. Residues 100–297 enclose the ABC transmembrane type-1 domain; sequence APITLLISFS…IINTIADLLT (198 aa).

Belongs to the binding-protein-dependent transport system permease family. OppBC subfamily. The complex is composed of two ATP-binding proteins (NikD and NikE), two transmembrane proteins (NikB and NikC) and a solute-binding protein (NikA).

The protein localises to the cell membrane. Part of the ABC transporter complex NikABCDE (Opp2) involved in nickel import. Probably responsible for the translocation of the substrate across the membrane. The sequence is that of Nickel import system permease protein NikB from Staphylococcus aureus (strain Mu50 / ATCC 700699).